The following is a 189-amino-acid chain: ATP synthase subunit b (189 aa).

Residues 23–43 form a helical membrane-spanning segment; that stretch reads IEIVLSLVVFGLLLFAVWKFV.

The protein belongs to the ATPase B chain family. In terms of assembly, F-type ATPases have 2 components, F(1) - the catalytic core - and F(0) - the membrane proton channel. F(1) has five subunits: alpha(3), beta(3), gamma(1), delta(1), epsilon(1). F(0) has three main subunits: a(1), b(2) and c(10-14). The alpha and beta chains form an alternating ring which encloses part of the gamma chain. F(1) is attached to F(0) by a central stalk formed by the gamma and epsilon chains, while a peripheral stalk is formed by the delta and b chains.

The protein localises to the cell membrane. In terms of biological role, f(1)F(0) ATP synthase produces ATP from ADP in the presence of a proton or sodium gradient. F-type ATPases consist of two structural domains, F(1) containing the extramembraneous catalytic core and F(0) containing the membrane proton channel, linked together by a central stalk and a peripheral stalk. During catalysis, ATP synthesis in the catalytic domain of F(1) is coupled via a rotary mechanism of the central stalk subunits to proton translocation. Component of the F(0) channel, it forms part of the peripheral stalk, linking F(1) to F(0). The protein is ATP synthase subunit b of Nocardioides sp. (strain ATCC BAA-499 / JS614).